A 719-amino-acid polypeptide reads, in one-letter code: Translation initiation factor IF-2 (719 aa).

Residues 54 to 67 (NKEETKPNVDEKPP) are compositionally biased toward basic and acidic residues. 2 disordered regions span residues 54-75 (NKEE…LTDN) and 97-122 (STKN…KRKN). Basic residues predominate over residues 109 to 122 (KDKKKKNKKDKRKN). In terms of domain architecture, tr-type G spans 221-390 (HRSPVVTVMG…LLVSEMSELK (170 aa)). A G1 region spans residues 230–237 (GHVDHGKT). Position 230–237 (230–237 (GHVDHGKT)) interacts with GTP. The interval 255–259 (GITQH) is G2. Residues 276-279 (DTPG) are G3. GTP-binding positions include 276–280 (DTPGH) and 330–333 (NKMD). Residues 330-333 (NKMD) are G4. Residues 366–368 (SAR) are G5.

This sequence belongs to the TRAFAC class translation factor GTPase superfamily. Classic translation factor GTPase family. IF-2 subfamily.

Its subcellular location is the cytoplasm. Functionally, one of the essential components for the initiation of protein synthesis. Protects formylmethionyl-tRNA from spontaneous hydrolysis and promotes its binding to the 30S ribosomal subunits. Also involved in the hydrolysis of GTP during the formation of the 70S ribosomal complex. The protein is Translation initiation factor IF-2 of Alkaliphilus oremlandii (strain OhILAs) (Clostridium oremlandii (strain OhILAs)).